Reading from the N-terminus, the 201-residue chain is Small ribosomal subunit protein uS4c (201 aa).

The disordered stretch occupies residues 15-43 (LGALPGLTSKRPRPGSDLRNQSRSGKRSQ). One can recognise an S4 RNA-binding domain in the interval 89 to 150 (MRLDNILFRL…EQRSRALIQN (62 aa)).

Belongs to the universal ribosomal protein uS4 family. In terms of assembly, part of the 30S ribosomal subunit. Contacts protein S5. The interaction surface between S4 and S5 is involved in control of translational fidelity.

The protein localises to the plastid. It is found in the chloroplast. One of the primary rRNA binding proteins, it binds directly to 16S rRNA where it nucleates assembly of the body of the 30S subunit. Its function is as follows. With S5 and S12 plays an important role in translational accuracy. This chain is Small ribosomal subunit protein uS4c (rps4), found in Liriodendron tulipifera (Tuliptree).